The sequence spans 600 residues: Albumin (600 aa).

An N-terminal signal peptide occupies residues 1 to 10; the sequence is LLFLFSSAYS. Positions 11-16 are excised as a propeptide; sequence RGVFRR. Albumin domains are found at residues 11-202, 203-395, and 396-593; these read RGVF…DELR, DEGK…EFQP, and LVEE…KFVA. Residue histidine 19 coordinates Cu cation. A Phosphoserine modification is found at serine 21. Ca(2+) contacts are provided by glutamate 22 and aspartate 29. Cysteine 69 and cysteine 78 are disulfide-bonded. 2 positions are modified to phosphoserine: serine 74 and serine 81. Residue histidine 83 participates in Zn(2+) binding. Disulfide bonds link cysteine 91/cysteine 107, cysteine 106/cysteine 117, cysteine 140/cysteine 185, cysteine 184/cysteine 193, cysteine 216/cysteine 262, and cysteine 261/cysteine 269. Position 99 is a phosphothreonine (threonine 99). Residue lysine 221 is modified to N6-succinyllysine. Lysine 256 contributes to the (4Z,15Z)-bilirubin IXalpha binding site. Ca(2+) is bound at residue glutamate 260. Zn(2+)-binding residues include histidine 263 and aspartate 265. Residues aspartate 265, glutamate 268, aspartate 271, and aspartate 275 each coordinate Ca(2+). Cystine bridges form between cysteine 281-cysteine 295, cysteine 294-cysteine 305, cysteine 332-cysteine 377, cysteine 376-cysteine 385, cysteine 408-cysteine 454, cysteine 453-cysteine 464, cysteine 477-cysteine 493, and cysteine 492-cysteine 503. Phosphoserine is present on serine 289. At serine 435 the chain carries Phosphoserine. Residues threonine 436 and threonine 438 each carry the phosphothreonine modification. Lysine 452 is modified (N6-succinyllysine). Serine 505 carries the phosphoserine modification. 2 disulfide bridges follow: cysteine 530/cysteine 575 and cysteine 574/cysteine 583. Position 535 is an N6-succinyllysine (lysine 535). Lysine 550 bears the N6-methyllysine mark. Residue lysine 580 is modified to N6-succinyllysine.

Belongs to the ALB/AFP/VDB family. As to quaternary structure, interacts with FCGRT; this interaction regulates ALB homeostasis. Interacts with TASOR. In plasma, occurs in a covalently-linked complex with chromophore-bound alpha-1-microglobulin; this interaction does not prevent fatty acid binding to ALB. In terms of processing, phosphorylated by FAM20C in the extracellular medium. Plasma.

Its subcellular location is the secreted. Binds water, Ca(2+), Na(+), K(+), fatty acids, hormones, bilirubin and drugs. Its main function is the regulation of the colloidal osmotic pressure of blood. Major zinc transporter in plasma, typically binds about 80% of all plasma zinc. Major calcium and magnesium transporter in plasma, binds approximately 45% of circulating calcium and magnesium in plasma. Potentially has more than two calcium-binding sites and might additionally bind calcium in a non-specific manner. The shared binding site between zinc and calcium at residue Asp-265 suggests a crosstalk between zinc and calcium transport in the blood. The rank order of affinity is zinc &gt; calcium &gt; magnesium. Binds to the bacterial siderophore enterobactin and inhibits enterobactin-mediated iron uptake of E.coli from ferric transferrin, and may thereby limit the utilization of iron and growth of enteric bacteria such as E.coli. Does not prevent iron uptake by the bacterial siderophore aerobactin. The polypeptide is Albumin (ALB) (Macaca mulatta (Rhesus macaque)).